The chain runs to 159 residues: 2-C-methyl-D-erythritol 2,4-cyclodiphosphate synthase (159 aa).

Residues aspartate 8 and histidine 10 each coordinate a divalent metal cation. Residues 8–10 and 34–35 contribute to the 4-CDP-2-C-methyl-D-erythritol 2-phosphate site; these read DVH and HS. Histidine 42 serves as a coordination point for a divalent metal cation. 4-CDP-2-C-methyl-D-erythritol 2-phosphate contacts are provided by residues 56–58, 61–65, 100–106, 132–135, phenylalanine 139, and arginine 142; these read DIG, FPDTD, AQAPKMA, and TTSE.

It belongs to the IspF family. In terms of assembly, homotrimer. It depends on a divalent metal cation as a cofactor.

It carries out the reaction 4-CDP-2-C-methyl-D-erythritol 2-phosphate = 2-C-methyl-D-erythritol 2,4-cyclic diphosphate + CMP. The protein operates within isoprenoid biosynthesis; isopentenyl diphosphate biosynthesis via DXP pathway; isopentenyl diphosphate from 1-deoxy-D-xylulose 5-phosphate: step 4/6. Involved in the biosynthesis of isopentenyl diphosphate (IPP) and dimethylallyl diphosphate (DMAPP), two major building blocks of isoprenoid compounds. Catalyzes the conversion of 4-diphosphocytidyl-2-C-methyl-D-erythritol 2-phosphate (CDP-ME2P) to 2-C-methyl-D-erythritol 2,4-cyclodiphosphate (ME-CPP) with a corresponding release of cytidine 5-monophosphate (CMP). The polypeptide is 2-C-methyl-D-erythritol 2,4-cyclodiphosphate synthase (Aliivibrio salmonicida (strain LFI1238) (Vibrio salmonicida (strain LFI1238))).